The chain runs to 70 residues: Large ribosomal subunit protein uL29 (70 aa).

Belongs to the universal ribosomal protein uL29 family.

The protein is Large ribosomal subunit protein uL29 of Prochlorococcus marinus (strain MIT 9313).